The primary structure comprises 235 residues: Orotidine 5'-phosphate decarboxylase (235 aa).

Substrate contacts are provided by residues Asp16, Lys38, 65–74, Thr120, Arg181, Gln190, Gly210, and Arg211; that span reads DLKLHDIGNT. Lys67 (proton donor) is an active-site residue.

Belongs to the OMP decarboxylase family. Type 1 subfamily. In terms of assembly, homodimer.

The enzyme catalyses orotidine 5'-phosphate + H(+) = UMP + CO2. It functions in the pathway pyrimidine metabolism; UMP biosynthesis via de novo pathway; UMP from orotate: step 2/2. In terms of biological role, catalyzes the decarboxylation of orotidine 5'-monophosphate (OMP) to uridine 5'-monophosphate (UMP). In Rhodopseudomonas palustris (strain BisA53), this protein is Orotidine 5'-phosphate decarboxylase.